The sequence spans 390 residues: S-adenosylmethionine synthase 1 (390 aa).

E9 is a binding site for Mg(2+). H15 contributes to the ATP binding site. Residue E43 participates in K(+) binding. L-methionine is bound by residues E56 and Q99. Residues 167–169 (DGK), 235–238 (SGRF), D246, 252–253 (RK), A269, K273, and K277 contribute to the ATP site. D246 contacts L-methionine. K277 is a binding site for L-methionine.

It belongs to the AdoMet synthase family. In terms of assembly, homotetramer. The cofactor is Mn(2+). Mg(2+) serves as cofactor. Requires Co(2+) as cofactor. It depends on K(+) as a cofactor.

It is found in the cytoplasm. It carries out the reaction L-methionine + ATP + H2O = S-adenosyl-L-methionine + phosphate + diphosphate. It participates in amino-acid biosynthesis; S-adenosyl-L-methionine biosynthesis; S-adenosyl-L-methionine from L-methionine: step 1/1. Functionally, catalyzes the formation of S-adenosylmethionine from methionine and ATP. The reaction comprises two steps that are both catalyzed by the same enzyme: formation of S-adenosylmethionine (AdoMet) and triphosphate, and subsequent hydrolysis of the triphosphate. In Actinidia chinensis var. chinensis (Chinese soft-hair kiwi), this protein is S-adenosylmethionine synthase 1 (SAM1).